The chain runs to 107 residues: UPF0145 protein PC1_1703 (107 aa).

The protein belongs to the UPF0145 family.

The polypeptide is UPF0145 protein PC1_1703 (Pectobacterium carotovorum subsp. carotovorum (strain PC1)).